The chain runs to 338 residues: Protein SPATA31F3 (338 aa).

A helical membrane pass occupies residues 7-29; sequence VLWDVGYPLYTYGSICIIALIIW. Residue Ser-152 is modified to Phosphoserine. Residues 290-306 are compositionally biased toward basic and acidic residues; it reads DRTKNIEKSPTVTKDHV. Residues 290–338 are disordered; sequence DRTKNIEKSPTVTKDHVWGATTQKTTEDPEAQPPSTEEEGLIFCDAPSA.

The protein belongs to the SPATA31 family.

The protein localises to the membrane. The chain is Protein SPATA31F3 from Homo sapiens (Human).